The chain runs to 42 residues: Iota-conotoxin-like R11.16 (42 aa).

Disulfide bonds link C5–C19, C12–C22, C18–C27, and C21–C36.

It belongs to the conotoxin I1 superfamily. Expressed by the venom duct.

The protein resides in the secreted. In terms of biological role, iota-conotoxins bind to voltage-gated sodium channels (Nav) and act as agonists by shifting the voltage-dependence of activation to more hyperpolarized levels. Produces general excitatory symptoms. This Conus radiatus (Rayed cone) protein is Iota-conotoxin-like R11.16.